The sequence spans 123 residues: Peptide methionine sulfoxide reductase MsrA (123 aa).

Residue Cys8 is part of the active site.

This sequence belongs to the MsrA Met sulfoxide reductase family.

It catalyses the reaction L-methionyl-[protein] + [thioredoxin]-disulfide + H2O = L-methionyl-(S)-S-oxide-[protein] + [thioredoxin]-dithiol. The catalysed reaction is [thioredoxin]-disulfide + L-methionine + H2O = L-methionine (S)-S-oxide + [thioredoxin]-dithiol. Functionally, has an important function as a repair enzyme for proteins that have been inactivated by oxidation. Catalyzes the reversible oxidation-reduction of methionine sulfoxide in proteins to methionine. The chain is Peptide methionine sulfoxide reductase MsrA from Thermoactinomyces vulgaris.